The chain runs to 354 residues: Phosphoribosylformylglycinamidine cyclo-ligase (354 aa).

This sequence belongs to the AIR synthase family.

It localises to the cytoplasm. The enzyme catalyses 2-formamido-N(1)-(5-O-phospho-beta-D-ribosyl)acetamidine + ATP = 5-amino-1-(5-phospho-beta-D-ribosyl)imidazole + ADP + phosphate + H(+). Its pathway is purine metabolism; IMP biosynthesis via de novo pathway; 5-amino-1-(5-phospho-D-ribosyl)imidazole from N(2)-formyl-N(1)-(5-phospho-D-ribosyl)glycinamide: step 2/2. In Synechococcus sp. (strain JA-2-3B'a(2-13)) (Cyanobacteria bacterium Yellowstone B-Prime), this protein is Phosphoribosylformylglycinamidine cyclo-ligase.